Here is a 314-residue protein sequence, read N- to C-terminus: UDP-3-O-acyl-N-acetylglucosamine deacetylase (314 aa).

Zn(2+)-binding residues include histidine 82, histidine 239, and aspartate 243. The active-site Proton donor is the histidine 266.

This sequence belongs to the LpxC family. It depends on Zn(2+) as a cofactor.

The enzyme catalyses a UDP-3-O-[(3R)-3-hydroxyacyl]-N-acetyl-alpha-D-glucosamine + H2O = a UDP-3-O-[(3R)-3-hydroxyacyl]-alpha-D-glucosamine + acetate. It participates in glycolipid biosynthesis; lipid IV(A) biosynthesis; lipid IV(A) from (3R)-3-hydroxytetradecanoyl-[acyl-carrier-protein] and UDP-N-acetyl-alpha-D-glucosamine: step 2/6. Functionally, catalyzes the hydrolysis of UDP-3-O-myristoyl-N-acetylglucosamine to form UDP-3-O-myristoylglucosamine and acetate, the committed step in lipid A biosynthesis. This is UDP-3-O-acyl-N-acetylglucosamine deacetylase from Myxococcus xanthus (strain DK1622).